The following is a 500-amino-acid chain: Serine/threonine-protein phosphatase 2A 56 kDa regulatory subunit beta isoform (500 aa).

Over residues 1 to 19 (METKLPPASTPTSPSSPGL) the composition is skewed to low complexity. 2 disordered regions span residues 1–55 (METK…YQSN) and 474–500 (GTQGTQGAREAPLQRFVPQVAATGGQS). Phosphoserine; by CLK2 is present on residues serine 32, serine 35, serine 44, serine 46, serine 47, and serine 48. The segment covering 34–45 (RSLRRARPRRSH) has biased composition (basic residues).

Belongs to the phosphatase 2A regulatory subunit B56 family. Component of the serine/threonine-protein phosphatase 2A complex (PP2A). This complex consists of a common heterodimeric core enzyme, composed of a 36 kDa catalytic subunit (subunit C) and a 65 kDa constant scaffold subunit (PR65 or subunit A), that associates with a variety of regulatory subunits. Proteins that associate with the core dimer include three families of regulatory subunits B (the R2/B/PR55/B55, R3/B''/PR72/PR130/PR59 and R5/B'/B56 families), the 48 kDa variable regulatory subunit, viral proteins, and cell signaling molecules. Interacts with SGO1. Interacts with AKT1. In terms of tissue distribution, highly expressed in brain.

It is found in the nucleus. Its function is as follows. As the regulatory component of the serine/threonine-protein phosphatase 2A (PP2A) holoenzyme, modulates substrate specificity, subcellular localization, and responsiveness to phosphorylation. The phosphorylated form mediates the interaction between PP2A and AKT1, leading to AKT1 dephosphorylation. The sequence is that of Serine/threonine-protein phosphatase 2A 56 kDa regulatory subunit beta isoform (PPP2R5B) from Oryctolagus cuniculus (Rabbit).